We begin with the raw amino-acid sequence, 1189 residues long: Magnesium-chelatase subunit H (1189 aa).

This sequence belongs to the Mg-chelatase subunit H family.

It catalyses the reaction protoporphyrin IX + Mg(2+) + ATP + H2O = Mg-protoporphyrin IX + ADP + phosphate + 3 H(+). The protein operates within porphyrin-containing compound metabolism; bacteriochlorophyll biosynthesis (light-independent). Involved in bacteriochlorophyll pigment biosynthesis; introduces a magnesium ion into protoporphyrin IX to yield Mg-protoroporphyrin IX. This Rhodobacter capsulatus (strain ATCC BAA-309 / NBRC 16581 / SB1003) protein is Magnesium-chelatase subunit H (bchH).